The sequence spans 199 residues: Potassium-transporting ATPase KdpC subunit 2 (199 aa).

The helical transmembrane segment at 13–33 (ITLIFWLVTAIIYPLAILVVG) threads the bilayer.

The protein belongs to the KdpC family. As to quaternary structure, the system is composed of three essential subunits: KdpA, KdpB and KdpC.

Its subcellular location is the cell inner membrane. In terms of biological role, part of the high-affinity ATP-driven potassium transport (or Kdp) system, which catalyzes the hydrolysis of ATP coupled with the electrogenic transport of potassium into the cytoplasm. This subunit acts as a catalytic chaperone that increases the ATP-binding affinity of the ATP-hydrolyzing subunit KdpB by the formation of a transient KdpB/KdpC/ATP ternary complex. This chain is Potassium-transporting ATPase KdpC subunit 2, found in Nostoc sp. (strain PCC 7120 / SAG 25.82 / UTEX 2576).